The chain runs to 252 residues: Ribosomal RNA small subunit methyltransferase J (252 aa).

Residues 126-127 (ER) and D176 each bind S-adenosyl-L-methionine.

This sequence belongs to the methyltransferase superfamily. RsmJ family.

Its subcellular location is the cytoplasm. The enzyme catalyses guanosine(1516) in 16S rRNA + S-adenosyl-L-methionine = N(2)-methylguanosine(1516) in 16S rRNA + S-adenosyl-L-homocysteine + H(+). Functionally, specifically methylates the guanosine in position 1516 of 16S rRNA. The chain is Ribosomal RNA small subunit methyltransferase J from Bdellovibrio bacteriovorus (strain ATCC 15356 / DSM 50701 / NCIMB 9529 / HD100).